We begin with the raw amino-acid sequence, 868 residues long: Alanine--tRNA ligase (868 aa).

Residues histidine 556, histidine 560, cysteine 666, and histidine 670 each contribute to the Zn(2+) site.

The protein belongs to the class-II aminoacyl-tRNA synthetase family. Requires Zn(2+) as cofactor.

Its subcellular location is the cytoplasm. It carries out the reaction tRNA(Ala) + L-alanine + ATP = L-alanyl-tRNA(Ala) + AMP + diphosphate. Functionally, catalyzes the attachment of alanine to tRNA(Ala) in a two-step reaction: alanine is first activated by ATP to form Ala-AMP and then transferred to the acceptor end of tRNA(Ala). Also edits incorrectly charged Ser-tRNA(Ala) and Gly-tRNA(Ala) via its editing domain. The polypeptide is Alanine--tRNA ligase (Elusimicrobium minutum (strain Pei191)).